The chain runs to 191 residues: Orotate phosphoribosyltransferase (191 aa).

114–122 (EDVVTTGKS) is a binding site for 5-phospho-alpha-D-ribose 1-diphosphate. The orotate site is built by Thr-118 and Arg-146.

The protein belongs to the purine/pyrimidine phosphoribosyltransferase family. PyrE subfamily. As to quaternary structure, homodimer. Requires Mg(2+) as cofactor.

It carries out the reaction orotidine 5'-phosphate + diphosphate = orotate + 5-phospho-alpha-D-ribose 1-diphosphate. It participates in pyrimidine metabolism; UMP biosynthesis via de novo pathway; UMP from orotate: step 1/2. Its function is as follows. Catalyzes the transfer of a ribosyl phosphate group from 5-phosphoribose 1-diphosphate to orotate, leading to the formation of orotidine monophosphate (OMP). In Clostridium botulinum (strain Langeland / NCTC 10281 / Type F), this protein is Orotate phosphoribosyltransferase.